The chain runs to 463 residues: Type I restriction enzyme StySPI specificity subunit (463 aa).

It belongs to the type-I restriction system S methylase family. As to quaternary structure, the type I restriction/modification system is composed of three polypeptides R, M and S; the restriction enzyme has stoichiometry R(2)M(2)S(1) while the methyltransferase is M(2)S(1).

In terms of biological role, the specificity (S) subunit of a type I restriction enzyme; this subunit dictates DNA sequence specificity. The M and S subunits together form a methyltransferase (MTase) that methylates A-2 on the top strand and A-3 on the bottom strand of the sequence 5'-AACN(6)GTRC-3'. In the presence of the R subunit the complex can also act as an endonuclease, binding to the same target sequence but cutting the DNA some distance from this site. Whether the DNA is cut or modified depends on the methylation state of the target sequence. When the target site is unmodified, the DNA is cut. When the target site is hemimethylated, the complex acts as a maintenance MTase modifying the DNA so that both strands become methylated. After locating a non-methylated recognition site, the enzyme complex serves as a molecular motor that translocates DNA in an ATP-dependent manner until a collision occurs that triggers cleavage. The polypeptide is Type I restriction enzyme StySPI specificity subunit (Salmonella potsdam).